The sequence spans 270 residues: Regulatory protein RecX (270 aa).

This sequence belongs to the RecX family.

The protein localises to the cytoplasm. Functionally, modulates RecA activity. The polypeptide is Regulatory protein RecX (Bacillus thuringiensis subsp. konkukian (strain 97-27)).